The chain runs to 321 residues: Ferredoxin--NADP reductase (321 aa).

7 residues coordinate FAD: glutamate 33, glutamine 41, tyrosine 46, valine 86, leucine 119, aspartate 277, and serine 318.

This sequence belongs to the ferredoxin--NADP reductase type 2 family. In terms of assembly, homodimer. FAD is required as a cofactor.

The enzyme catalyses 2 reduced [2Fe-2S]-[ferredoxin] + NADP(+) + H(+) = 2 oxidized [2Fe-2S]-[ferredoxin] + NADPH. This chain is Ferredoxin--NADP reductase, found in Lactococcus lactis subsp. cremoris (strain MG1363).